Consider the following 230-residue polypeptide: Large ribosomal subunit protein uL1 (230 aa).

This sequence belongs to the universal ribosomal protein uL1 family. As to quaternary structure, part of the 50S ribosomal subunit.

Its function is as follows. Binds directly to 23S rRNA. The L1 stalk is quite mobile in the ribosome, and is involved in E site tRNA release. In terms of biological role, protein L1 is also a translational repressor protein, it controls the translation of the L11 operon by binding to its mRNA. In Leuconostoc citreum (strain KM20), this protein is Large ribosomal subunit protein uL1.